Reading from the N-terminus, the 243-residue chain is 4-hydroxy-tetrahydrodipicolinate reductase (243 aa).

Residues 9–14 (GANGKM), 78–80 (GTS), and 104–107 (APNF) each bind NAD(+). The Proton donor/acceptor role is filled by H134. H135 serves as a coordination point for (S)-2,3,4,5-tetrahydrodipicolinate. Residue K138 is the Proton donor of the active site. 144–145 (GT) lines the (S)-2,3,4,5-tetrahydrodipicolinate pocket.

Belongs to the DapB family.

Its subcellular location is the cytoplasm. The catalysed reaction is (S)-2,3,4,5-tetrahydrodipicolinate + NAD(+) + H2O = (2S,4S)-4-hydroxy-2,3,4,5-tetrahydrodipicolinate + NADH + H(+). It catalyses the reaction (S)-2,3,4,5-tetrahydrodipicolinate + NADP(+) + H2O = (2S,4S)-4-hydroxy-2,3,4,5-tetrahydrodipicolinate + NADPH + H(+). It participates in amino-acid biosynthesis; L-lysine biosynthesis via DAP pathway; (S)-tetrahydrodipicolinate from L-aspartate: step 4/4. In terms of biological role, catalyzes the conversion of 4-hydroxy-tetrahydrodipicolinate (HTPA) to tetrahydrodipicolinate. The chain is 4-hydroxy-tetrahydrodipicolinate reductase from Legionella pneumophila (strain Corby).